The following is a 341-amino-acid chain: DNA-directed RNA polymerase subunit alpha (341 aa).

The interval 1–233 (MIQDEVPVSA…DLFLPFLHTE (233 aa)) is alpha N-terminal domain (alpha-NTD). The segment at 262 to 341 (DRMAKEVAFK…NLPRNKFSID (80 aa)) is alpha C-terminal domain (alpha-CTD).

It belongs to the RNA polymerase alpha chain family. In terms of assembly, in plastids the minimal PEP RNA polymerase catalytic core is composed of four subunits: alpha, beta, beta', and beta''. When a (nuclear-encoded) sigma factor is associated with the core the holoenzyme is formed, which can initiate transcription.

It is found in the plastid. The protein localises to the chloroplast. The catalysed reaction is RNA(n) + a ribonucleoside 5'-triphosphate = RNA(n+1) + diphosphate. In terms of biological role, DNA-dependent RNA polymerase catalyzes the transcription of DNA into RNA using the four ribonucleoside triphosphates as substrates. The chain is DNA-directed RNA polymerase subunit alpha from Angiopteris evecta (Mule's foot fern).